The primary structure comprises 49 residues: Large ribosomal subunit protein bL33 (49 aa).

This sequence belongs to the bacterial ribosomal protein bL33 family.

The chain is Large ribosomal subunit protein bL33 from Clostridium acetobutylicum (strain ATCC 824 / DSM 792 / JCM 1419 / IAM 19013 / LMG 5710 / NBRC 13948 / NRRL B-527 / VKM B-1787 / 2291 / W).